Reading from the N-terminus, the 319-residue chain is Cytochrome f (319 aa).

The signal sequence occupies residues 1–35; the sequence is METRNIFSWIKEQITRSISVSLMIYIITRTAVSNA. 4 residues coordinate heme: Tyr36, Cys56, Cys59, and His60. The helical transmembrane segment at 285 to 305 threads the bilayer; that stretch reads VQGLLFFLASVILAQIFLVLK.

It belongs to the cytochrome f family. In terms of assembly, the 4 large subunits of the cytochrome b6-f complex are cytochrome b6, subunit IV (17 kDa polypeptide, petD), cytochrome f and the Rieske protein, while the 4 small subunits are PetG, PetL, PetM and PetN. The complex functions as a dimer. Requires heme as cofactor.

The protein localises to the plastid. Its subcellular location is the chloroplast thylakoid membrane. Functionally, component of the cytochrome b6-f complex, which mediates electron transfer between photosystem II (PSII) and photosystem I (PSI), cyclic electron flow around PSI, and state transitions. The sequence is that of Cytochrome f from Coffea arabica (Arabian coffee).